The primary structure comprises 578 residues: Arginine--tRNA ligase (578 aa).

Positions 127–137 (PNLAKEMHVGH) match the 'HIGH' region motif.

The protein belongs to the class-I aminoacyl-tRNA synthetase family. In terms of assembly, monomer.

The protein resides in the cytoplasm. It catalyses the reaction tRNA(Arg) + L-arginine + ATP = L-arginyl-tRNA(Arg) + AMP + diphosphate. The protein is Arginine--tRNA ligase of Pseudomonas fluorescens (strain SBW25).